The following is a 392-amino-acid chain: Bifunctional enzyme IspD/IspF (392 aa).

2-C-methyl-D-erythritol 4-phosphate cytidylyltransferase regions lie at residues 1–234 and 1–235; these read MTES…MMRT and MTES…MRTA. A 2-C-methyl-D-erythritol 2,4-cyclodiphosphate synthase region spans residues 235-392; it reads AVGMGYDVHR…AVATIQLPET (158 aa). Residues Asp-241 and His-243 each contribute to the a divalent metal cation site. Residues 241 to 243 and 267 to 268 each bind 4-CDP-2-C-methyl-D-erythritol 2-phosphate; these read DVH and HS. His-275 is an a divalent metal cation binding site. 4-CDP-2-C-methyl-D-erythritol 2-phosphate-binding positions include 289 to 291, 365 to 368, Phe-372, and Arg-375; these read DIG and TTTE.

In the N-terminal section; belongs to the IspD/TarI cytidylyltransferase family. IspD subfamily. This sequence in the C-terminal section; belongs to the IspF family. It depends on a divalent metal cation as a cofactor.

It carries out the reaction 2-C-methyl-D-erythritol 4-phosphate + CTP + H(+) = 4-CDP-2-C-methyl-D-erythritol + diphosphate. The catalysed reaction is 4-CDP-2-C-methyl-D-erythritol 2-phosphate = 2-C-methyl-D-erythritol 2,4-cyclic diphosphate + CMP. It participates in isoprenoid biosynthesis; isopentenyl diphosphate biosynthesis via DXP pathway; isopentenyl diphosphate from 1-deoxy-D-xylulose 5-phosphate: step 2/6. The protein operates within isoprenoid biosynthesis; isopentenyl diphosphate biosynthesis via DXP pathway; isopentenyl diphosphate from 1-deoxy-D-xylulose 5-phosphate: step 4/6. Bifunctional enzyme that catalyzes the formation of 4-diphosphocytidyl-2-C-methyl-D-erythritol from CTP and 2-C-methyl-D-erythritol 4-phosphate (MEP) (IspD), and catalyzes the conversion of 4-diphosphocytidyl-2-C-methyl-D-erythritol 2-phosphate (CDP-ME2P) to 2-C-methyl-D-erythritol 2,4-cyclodiphosphate (ME-CPP) with a corresponding release of cytidine 5-monophosphate (CMP) (IspF). The polypeptide is Bifunctional enzyme IspD/IspF (Sphingopyxis alaskensis (strain DSM 13593 / LMG 18877 / RB2256) (Sphingomonas alaskensis)).